A 224-amino-acid polypeptide reads, in one-letter code: Deoxyribose-phosphate aldolase (224 aa).

Residue D98 is the Proton donor/acceptor of the active site. K159 acts as the Schiff-base intermediate with acetaldehyde in catalysis. The active-site Proton donor/acceptor is K189.

The protein belongs to the DeoC/FbaB aldolase family. DeoC type 1 subfamily.

Its subcellular location is the cytoplasm. It carries out the reaction 2-deoxy-D-ribose 5-phosphate = D-glyceraldehyde 3-phosphate + acetaldehyde. It functions in the pathway carbohydrate degradation; 2-deoxy-D-ribose 1-phosphate degradation; D-glyceraldehyde 3-phosphate and acetaldehyde from 2-deoxy-alpha-D-ribose 1-phosphate: step 2/2. In terms of biological role, catalyzes a reversible aldol reaction between acetaldehyde and D-glyceraldehyde 3-phosphate to generate 2-deoxy-D-ribose 5-phosphate. In Methanothermobacter thermautotrophicus (strain ATCC 29096 / DSM 1053 / JCM 10044 / NBRC 100330 / Delta H) (Methanobacterium thermoautotrophicum), this protein is Deoxyribose-phosphate aldolase.